We begin with the raw amino-acid sequence, 116 residues long: Large ribosomal subunit protein uL18 (116 aa).

The protein belongs to the universal ribosomal protein uL18 family. Part of the 50S ribosomal subunit; part of the 5S rRNA/L5/L18/L25 subcomplex. Contacts the 5S and 23S rRNAs.

Functionally, this is one of the proteins that bind and probably mediate the attachment of the 5S RNA into the large ribosomal subunit, where it forms part of the central protuberance. This chain is Large ribosomal subunit protein uL18, found in Mycoplasma capricolum subsp. capricolum (strain California kid / ATCC 27343 / NCTC 10154).